The primary structure comprises 560 residues: Radial spoke head protein 3 homolog (560 aa).

Disordered regions lie at residues 134-186 (RKRG…EEPM) and 225-249 (ARKR…PVEG). Residues 153 to 162 (RAPSTYTYTS) show a composition bias toward polar residues. A coiled-coil region spans residues 215-239 (DSLELQRQREARKRALARKQAQEQL). Position 286 is a phosphothreonine; by MAPK1 (threonine 286). Positions 331–385 (LEVMEEEELANLRASQREYEELRNSERAEVQRLEEQERRHREEKERRKKQQWEIM) form a coiled coil. 3 disordered regions span residues 354–375 (NSER…EEKE), 473–498 (HGED…ESLE), and 526–560 (DRRS…EELS).

The protein belongs to the flagellar radial spoke RSP3 family. As to quaternary structure, component of the axonemal radial spoke 1 (RS1) and 2 (RS2) complexes, at least composed of spoke head proteins RSPH1, RSPH3, RSPH9 and the cilia-specific component RSPH4A or sperm-specific component RSPH6A, spoke stalk proteins RSPH14, DNAJB13, DYDC1, ROPN1L and NME5, and the RS1 complex-specific anchor protein IQUB. Interacts with IQUB. Interacts with phosphorylated MAPK1. Interacts with MEK1. Interacts with PKA regulatory subunits PRKAR1A and PRKAR1B. Interacts with RSPH1. Interacts with RSPH4A. Interacts with RSPH6A. Interacts with RSPH9. Interacts with LRRC23.

It is found in the cytoplasm. The protein resides in the cytoskeleton. The protein localises to the cilium axoneme. Its subcellular location is the flagellum axoneme. Functions as part of axonemal radial spoke complexes that play an important part in the motility of sperm and cilia. Functions as a protein kinase A-anchoring protein that scaffolds the cAMP-dependent protein kinase holoenzyme. May serve as a point of convergence for MAPK and PKA signaling in cilia. In Homo sapiens (Human), this protein is Radial spoke head protein 3 homolog (RSPH3).